Reading from the N-terminus, the 1547-residue chain is MYAAVEHGPVLCSDSNILCLSWKGRVPKSEKEKPVCRRRYYEEGWLATGNGRGVVGVTFTSSHCRRDRSTPQRINFNLRGHNSEVVLVRWNEPYQKLATCDADGGIFVWIQYEGRWSVELVNDRGAQVSDFTWSHDGTQALISYRDGFVLVGSVSGQRHWSSEINLESQITCGIWTPDDQQVLFGTADGQVIVMDCHGRMLAHVLLHESDGILSMSWNYPIFLVEDSSESDTDSDDYSPPQDGPAAYPIPVQNTKPLLTVSFTSGDISLMNNYDDLSPTVIRSGLKEVVAQWCTQGDLLAVAGMEQQAQLSELPNGPLLKSAMVKFYNVRGEHIFTLDTLVQRPIISICWGHRDSRLLMASGPALYVVRVEHRVSSLQLLCQQAIASTLREDKDVNKLTLPPRLCSYLSTAFIPTIKPPIPDPNNMRDFVSYPSAGNERLHCTMKRTEDDPEVGGPCYTLYLEYLGGLVPILKGRRISKLRPEFVIMDPRTDSKSDEIYGNSLISTVIDSCNCSDSSDIELSDDWAAKKSPKISRSSKSPKLPRISIEARKSPKLPRAAQEISRSPRLPMRKPSMGSPSLTRREFPFEDITQHNYLAQVTSNIWGTKFKIVGLAAFLPTNLGAVIYKTSLLHLQPRQMTIYLPEVRKISMDYINLPVFNPNVFSEDEDDLPVTGASGVPENNPPCTVNIPIAPIHSSAQALSPTQSIGLVQSLLANQNVQLDVLTNQTTAVGSAEHAGDAATQYPVSSRYSNPGQVIFGGVEMGRIIQNPPQLPLPPPPPPPPQAPMQLSAVDHGDRDHEHLQKSAKALRPVPQLAAEGDAVVFSAPQEVQVAKMNPPPPYPGTIPAAPTTAAPPPPLPPPQPPVDVCLKKGDFSLYPTAAHYQPPLGYERITTFDSSGNVEEVCRPRTRMLCSQNTYTLPGPGSSATLRLTATEKKVPQPCTSATLNRLTVPRYSIPTGDPPPYPEIASQLAQGRSAAQRLDNSLIHATLRRNNREVALKMAQLADSSRAPLQPLAKPKGGAAGAVAQLPARPPPALYTCSQCSGAGPSSQSGAALAHAISTSPLASQSSYNLLSPPDTSRDRTDYVNSAFTEDEALSQHCQLEKPLRHPPLPEAAVTMKRPPPYQWDPMLGEDVWVPQERTAQPTVPNPLKLSPLMLGQGQHLDVARVPFVPPKSPSSPTATFPTGYGMGMPYPGSYNNPSLPGVQAPCSPKDALSQAQFAQQESAVVLQPAYPPSLSYCTLPPTYPGSSTCSSVQLPPIALHPWNSYSTCPPMQNTQGTLPPKPHLVVEKPLVSPPPAELQSHMGTEVMVETADNFQEVLSLTESPVPQRTEKFGKKNRKRLDSRAEEGSVQAITEGKVKKDARTLSDFNSLISSPRLGREKKKVKSQKDQLKSKKLNKTNEFQDSSESEPELFISGDELMNQSQGSKKGWKSKRSLRTASELEEFKCRKASEKEDGRLGSQGFVYVMANKQPLWNEATQVYQLDFGGRVTQESAKNFQIELEGRQVMQFGRIDGNAYILDFQYPFSAVQAFAVALANVTQRLK.

WD repeat units lie at residues glycine 80–glutamate 119, aspartate 123–serine 162, and asparagine 165–valine 204. Residues alanine 364–proline 414 form the SOCS box domain. The disordered stretch occupies residues serine 530 to leucine 580. A compositionally biased stretch (low complexity) spans isoleucine 533 to serine 546. Residue serine 577 is modified to Phosphoserine. Residues arginine 949 and arginine 954 each carry the asymmetric dimethylarginine modification. A phosphoserine mark is found at serine 1347 and serine 1378. Residues serine 1374–proline 1414 are disordered. Positions serine 1436–lysine 1547 are TUB.

It belongs to the TUB family.

It localises to the cytoplasm. The protein operates within protein modification; protein ubiquitination. May be a substrate-recognition component of a SCF-like ECS (Elongin-Cullin-SOCS-box protein) E3 ubiquitin ligase complex which mediates the ubiquitination and subsequent proteasomal degradation of target proteins. This chain is Tubby-related protein 4 (Tulp4), found in Mus musculus (Mouse).